A 356-amino-acid polypeptide reads, in one-letter code: D-alanine--D-alanine ligase (356 aa).

An ATP-grasp domain is found at 134 to 339 (KQLFEHRGLP…YPELITKLIE (206 aa)). Position 167–222 (167–222 (NDKLNYPVFVKPANLGSSIGISKCSNEVELKEGIKEAFQFDRKLVIEQGVNAREIE)) interacts with ATP. Positions 293, 306, and 308 each coordinate Mg(2+).

The protein belongs to the D-alanine--D-alanine ligase family. Mg(2+) is required as a cofactor. The cofactor is Mn(2+).

The protein resides in the cytoplasm. It catalyses the reaction 2 D-alanine + ATP = D-alanyl-D-alanine + ADP + phosphate + H(+). Its pathway is cell wall biogenesis; peptidoglycan biosynthesis. Its function is as follows. Cell wall formation. The polypeptide is D-alanine--D-alanine ligase (Staphylococcus aureus (strain MRSA252)).